The sequence spans 135 residues: Fatty acid-binding protein 5 (135 aa).

At alanine 2 the chain carries N-acetylalanine. At serine 3 the chain carries Phosphoserine. The Nuclear localization signal motif lies at 24–34; it reads KELGVGLALRK. Residues cysteine 43, threonine 56, and arginine 109 each coordinate 1-eicosanoylglycerol. Cysteines 120 and 127 form a disulfide. Residue 129-131 participates in 1-eicosanoylglycerol binding; the sequence is RVY. 129–131 serves as a coordination point for (9Z,12Z)-octadecadienoate; the sequence is RVY. Residue tyrosine 131 participates in hexadecanoate binding. Tyrosine 131 is an N-eicosanoyl ethanolamine binding site. At tyrosine 131 the chain carries Phosphotyrosine.

It belongs to the calycin superfamily. Fatty-acid binding protein (FABP) family. In terms of assembly, monomer. In terms of tissue distribution, widely expressed.

It is found in the cytoplasm. The protein resides in the nucleus. It localises to the synapse. Its subcellular location is the postsynaptic density. The protein localises to the secreted. It catalyses the reaction hexadecanoate(out) = hexadecanoate(in). The enzyme catalyses (9Z,12Z)-octadecadienoate(out) = (9Z,12Z)-octadecadienoate(in). The catalysed reaction is (9Z)-octadecenoate(out) = (9Z)-octadecenoate(in). Intracellular carrier for long-chain fatty acids and related active lipids, such as endocannabinoids, that regulate the metabolism and actions of the ligands they bind. In addition to the cytosolic transport, selectively delivers specific fatty acids from the cytosol to the nucleus, wherein they activate nuclear receptors. Delivers retinoic acid to the nuclear receptor peroxisome proliferator-activated receptor delta; which promotes proliferation and survival. May also serve as a synaptic carrier of endocannabinoid at central synapses and thus controls retrograde endocannabinoid signaling. Modulates inflammation by regulating PTGES induction via NF-kappa-B activation, and prostaglandin E2 (PGE2) biosynthesis during inflammation. May be involved in keratinocyte differentiation. This is Fatty acid-binding protein 5 from Mus musculus (Mouse).